The primary structure comprises 518 residues: Integrator complex subunit 14 (518 aa).

The VWFA domain maps to 2–204 (PTVVVMDVSL…KNVQSMFGKL (203 aa)). Mg(2+)-binding residues include serine 10, serine 12, and threonine 86.

This sequence belongs to the Integrator subunit 14 family. As to quaternary structure, component of the Integrator complex, composed of core subunits INTS1, INTS2, INTS3, INTS4, INTS5, INTS6, INTS7, INTS8, INTS9/RC74, INTS10, INTS11/CPSF3L, INTS12, INTS13, INTS14 and INTS15. The core complex associates with protein phosphatase 2A subunits PPP2CA and PPP2R1A, to form the Integrator-PP2A (INTAC) complex. INTS14 is part of the tail subcomplex, composed of INTS10, INTS13, INTS14 and INTS15.

It is found in the nucleus. Component of the integrator complex, a multiprotein complex that terminates RNA polymerase II (Pol II) transcription in the promoter-proximal region of genes. The integrator complex provides a quality checkpoint during transcription elongation by driving premature transcription termination of transcripts that are unfavorably configured for transcriptional elongation: the complex terminates transcription by (1) catalyzing dephosphorylation of the C-terminal domain (CTD) of Pol II subunit POLR2A/RPB1 and SUPT5H/SPT5, (2) degrading the exiting nascent RNA transcript via endonuclease activity and (3) promoting the release of Pol II from bound DNA. The integrator complex is also involved in terminating the synthesis of non-coding Pol II transcripts, such as enhancer RNAs (eRNAs), small nuclear RNAs (snRNAs), telomerase RNAs and long non-coding RNAs (lncRNAs). Within the integrator complex, INTS14 is part of the integrator tail module that acts as a platform for the recruitment of transcription factors at promoters. The chain is Integrator complex subunit 14 from Xenopus tropicalis (Western clawed frog).